Reading from the N-terminus, the 218-residue chain is Methylthioribulose-1-phosphate dehydratase (218 aa).

Histidine 107 and histidine 109 together coordinate Zn(2+).

The protein belongs to the aldolase class II family. MtnB subfamily. Zn(2+) is required as a cofactor.

It carries out the reaction 5-(methylsulfanyl)-D-ribulose 1-phosphate = 5-methylsulfanyl-2,3-dioxopentyl phosphate + H2O. Its pathway is amino-acid biosynthesis; L-methionine biosynthesis via salvage pathway; L-methionine from S-methyl-5-thio-alpha-D-ribose 1-phosphate: step 2/6. Catalyzes the dehydration of methylthioribulose-1-phosphate (MTRu-1-P) into 2,3-diketo-5-methylthiopentyl-1-phosphate (DK-MTP-1-P). This Xylella fastidiosa (strain Temecula1 / ATCC 700964) protein is Methylthioribulose-1-phosphate dehydratase.